The following is a 434-amino-acid chain: Enolase (434 aa).

(2R)-2-phosphoglycerate is bound at residue glutamine 166. The active-site Proton donor is the glutamate 208. Residues aspartate 245, glutamate 290, and aspartate 317 each coordinate Mg(2+). Residues lysine 342, arginine 371, serine 372, and lysine 393 each contribute to the (2R)-2-phosphoglycerate site. The active-site Proton acceptor is lysine 342.

The protein belongs to the enolase family. The cofactor is Mg(2+).

It is found in the cytoplasm. The protein localises to the secreted. It localises to the cell surface. It carries out the reaction (2R)-2-phosphoglycerate = phosphoenolpyruvate + H2O. The protein operates within carbohydrate degradation; glycolysis; pyruvate from D-glyceraldehyde 3-phosphate: step 4/5. In terms of biological role, catalyzes the reversible conversion of 2-phosphoglycerate (2-PG) into phosphoenolpyruvate (PEP). It is essential for the degradation of carbohydrates via glycolysis. This is Enolase from Caldicellulosiruptor bescii (strain ATCC BAA-1888 / DSM 6725 / KCTC 15123 / Z-1320) (Anaerocellum thermophilum).